Consider the following 129-residue polypeptide: Protein RALF-like 34 (129 aa).

The N-terminal stretch at 1 to 23 is a signal peptide; that stretch reads MAASSLNLLLILSLLTFISLQRS. Positions 24–76 are cleaved as a propeptide — removed in mature form; that stretch reads ESLSDNPSLTLLPDGFDWPISHSDEFDIIDGEESFEVTEEDDGVTDRRSLYWR. Cystine bridges form between Cys94–Cys107 and Cys121–Cys127.

This sequence belongs to the plant rapid alkalinization factor (RALF) family. Proteolytically cleaved, probably by S1P, a subtilisin-like serine protease (subtilase). In terms of tissue distribution, expressed in roots, stems and leaves.

Its subcellular location is the secreted. In terms of biological role, cell signaling peptide that may regulate plant stress, growth, and development. Mediates a rapid alkalinization of extracellular space by mediating a transient increase in the cytoplasmic Ca(2+) concentration leading to a calcium-dependent signaling events through a cell surface receptor and a concomitant activation of some intracellular mitogen-activated protein kinases. The chain is Protein RALF-like 34 (RALFL34) from Arabidopsis thaliana (Mouse-ear cress).